A 201-amino-acid polypeptide reads, in one-letter code: Pyridoxine/pyridoxamine 5'-phosphate oxidase (201 aa).

FMN is bound by residues 49–54, 64–65, Lys71, and Gln93; these read RMVLLK and YT. Lys54 serves as a coordination point for substrate. Positions 111, 115, and 119 each coordinate substrate. Residues 128-129 and Trp172 each bind FMN; that span reads QS. 178 to 180 lines the substrate pocket; sequence RLH. FMN is bound at residue Arg182.

It belongs to the pyridoxamine 5'-phosphate oxidase family. In terms of assembly, homodimer. The cofactor is FMN.

The enzyme catalyses pyridoxamine 5'-phosphate + O2 + H2O = pyridoxal 5'-phosphate + H2O2 + NH4(+). The catalysed reaction is pyridoxine 5'-phosphate + O2 = pyridoxal 5'-phosphate + H2O2. It participates in cofactor metabolism; pyridoxal 5'-phosphate salvage; pyridoxal 5'-phosphate from pyridoxamine 5'-phosphate: step 1/1. It functions in the pathway cofactor metabolism; pyridoxal 5'-phosphate salvage; pyridoxal 5'-phosphate from pyridoxine 5'-phosphate: step 1/1. Its function is as follows. Catalyzes the oxidation of either pyridoxine 5'-phosphate (PNP) or pyridoxamine 5'-phosphate (PMP) into pyridoxal 5'-phosphate (PLP). The protein is Pyridoxine/pyridoxamine 5'-phosphate oxidase of Ruegeria sp. (strain TM1040) (Silicibacter sp.).